The chain runs to 275 residues: F-box only protein 50 (275 aa).

The segment at 1–67 (MEEVREGHAL…LPEPAQPSEA (67 aa)) is disordered. Pro residues predominate over residues 26–62 (PPSPRSPSPPPSPPPLPSPPSLPSPAAPEAPELPEPA). Phosphoserine is present on residues Ser31, Ser37, and Ser49. The 179-residue stretch at 95–273 (LLLRRPLYRN…VTDSSVSVQL (179 aa)) folds into the FBA domain.

In terms of tissue distribution, expressed in the esophagus, oral cavity, skin, tongue and reproductive organs.

The protein localises to the cytoplasm. In terms of biological role, promotes cell proliferation. The protein is F-box only protein 50 (NCCRP1) of Homo sapiens (Human).